A 370-amino-acid chain; its full sequence is Cyclin-A3-4 (370 aa).

This sequence belongs to the cyclin family. Cyclin AB subfamily. Interacts with FZR2/CCS52A1, FZR1/CCS52A2 and FZR3/CCS52B.

This chain is Cyclin-A3-4 (CYCA3-4), found in Arabidopsis thaliana (Mouse-ear cress).